The chain runs to 294 residues: HTH-type transcriptional activator AmpR (294 aa).

Positions 6–63 (IPLNSLRAFEAAARQLSFTKAAIELNVTHAAISQQVKALEQRLNCRLFIRISRGLVLT) constitute an HTH lysR-type domain. The segment at residues 23 to 42 (FTKAAIELNVTHAAISQQVK) is a DNA-binding region (H-T-H motif).

The protein belongs to the LysR transcriptional regulatory family.

Its subcellular location is the cytoplasm. This protein is a positive regulator of gene expression of beta-lactamase (AmpC). The protein is HTH-type transcriptional activator AmpR (ampR) of Yersinia enterocolitica.